The sequence spans 384 residues: Alcohol dehydrogenase class-3 (384 aa).

The Zn(2+) site is built by Cys48, His70, Cys100, Cys103, Cys106, Cys114, and Cys177.

The protein belongs to the zinc-containing alcohol dehydrogenase family. Class-III subfamily. Homodimer. The cofactor is Zn(2+).

The protein resides in the cytoplasm. It carries out the reaction a primary alcohol + NAD(+) = an aldehyde + NADH + H(+). The catalysed reaction is a secondary alcohol + NAD(+) = a ketone + NADH + H(+). It catalyses the reaction S-(hydroxymethyl)glutathione + NADP(+) = S-formylglutathione + NADPH + H(+). The enzyme catalyses S-(hydroxymethyl)glutathione + NAD(+) = S-formylglutathione + NADH + H(+). Its function is as follows. Class-III ADH is remarkably ineffective in oxidizing ethanol, but it readily catalyzes the oxidation of long-chain primary alcohols and the oxidation of S-(hydroxymethyl) glutathione. Plays a role in the calcium flux to the cytoplasm in the ASJ sensory neurons upon removal of a nitric oxide stimulus. This Caenorhabditis elegans protein is Alcohol dehydrogenase class-3.